Consider the following 74-residue polypeptide: Exodeoxyribonuclease 7 small subunit (74 aa).

The protein belongs to the XseB family. Heterooligomer composed of large and small subunits.

The protein localises to the cytoplasm. The enzyme catalyses Exonucleolytic cleavage in either 5'- to 3'- or 3'- to 5'-direction to yield nucleoside 5'-phosphates.. Functionally, bidirectionally degrades single-stranded DNA into large acid-insoluble oligonucleotides, which are then degraded further into small acid-soluble oligonucleotides. In Bdellovibrio bacteriovorus (strain ATCC 15356 / DSM 50701 / NCIMB 9529 / HD100), this protein is Exodeoxyribonuclease 7 small subunit.